Here is a 441-residue protein sequence, read N- to C-terminus: Amino-acid acetyltransferase (441 aa).

The 140-residue stretch at 295-434 folds into the N-acetyltransferase domain; sequence EQIRRANIND…QALYNYQRRS (140 aa).

The protein belongs to the acetyltransferase family. ArgA subfamily. Homohexamer.

It is found in the cytoplasm. The catalysed reaction is L-glutamate + acetyl-CoA = N-acetyl-L-glutamate + CoA + H(+). It functions in the pathway amino-acid biosynthesis; L-arginine biosynthesis; N(2)-acetyl-L-ornithine from L-glutamate: step 1/4. The protein is Amino-acid acetyltransferase of Edwardsiella ictaluri (strain 93-146).